We begin with the raw amino-acid sequence, 26 residues long: uncharacterized protein (26 aa).

In terms of processing, phosphorylated by YfhK.

Its function is as follows. Probable member of a two-component regulatory system YfhA/YfhK. This is an uncharacterized protein from Klebsiella oxytoca.